A 795-amino-acid chain; its full sequence is Phenylalanine--tRNA ligase beta subunit (795 aa).

The tRNA-binding domain occupies 39–148 (AGVFDGVKVG…ENAPIGMDFR (110 aa)). One can recognise a B5 domain in the interval 401-476 (PKPNQVALRR…RIYGYNNIPN (76 aa)). Mg(2+)-binding residues include D454, D460, E463, and E464. Residues 701–794 (SKFPANRRDI…VSAQFGAALR (94 aa)) form the FDX-ACB domain.

This sequence belongs to the phenylalanyl-tRNA synthetase beta subunit family. Type 1 subfamily. As to quaternary structure, tetramer of two alpha and two beta subunits. Mg(2+) is required as a cofactor.

It localises to the cytoplasm. The enzyme catalyses tRNA(Phe) + L-phenylalanine + ATP = L-phenylalanyl-tRNA(Phe) + AMP + diphosphate + H(+). This Vibrio cholerae serotype O1 (strain ATCC 39315 / El Tor Inaba N16961) protein is Phenylalanine--tRNA ligase beta subunit (pheT).